The chain runs to 405 residues: Type III polyketide synthase 10 (405 aa).

A compositionally biased stretch (polar residues) spans 1 to 18 (MVSTNAGGIASKQASSMA). Positions 1–20 (MVSTNAGGIASKQASSMAPN) are disordered. Cys-170 functions as the Nucleophile in the catalytic mechanism.

It belongs to the thiolase-like superfamily. Chalcone/stilbene synthases family. Interacts with STS1. As to expression, expressed in adult flowers.

Its subcellular location is the endoplasmic reticulum. Its function is as follows. Plant type III polyketide synthases (PKSs) that catalyzes the condensation of fatty acyl-CoA with malonyl-CoA to generate triketide and tetraketide alpha-pyrones, the main components of pollen exine and potential sporopollenin precursors. May be involved in the synthesis of sporopollenin precursors in tapetal cells to regulate pollen wall formation. Required for exine and Ubisch body formation in anthers. Does not possess chalcone synthase (CHS) activity in vitro with the substrates 4-coumaroyl-CoA and malonyl-CoA. The sequence is that of Type III polyketide synthase 10 from Oryza sativa subsp. japonica (Rice).